Here is a 591-residue protein sequence, read N- to C-terminus: Serine/threonine-protein kinase Nek2 (591 aa).

One can recognise a Protein kinase domain in the interval 4–258 (YEVLEQIGKG…AAQLLKHPQL (255 aa)). Residues 10–18 (IGKGAFGSA) and K33 each bind ATP. Catalysis depends on D129, which acts as the Proton acceptor. 3 disordered regions span residues 309 to 331 (LGNERTVTFSKPSPERNSVSSTR), 382 to 408 (ARNQLEPPKTSYNRTYRSELPSKTTPN), and 500 to 534 (RTDGDNGSDSSGRNATAASSRGSNDSRQQRFDTSS). Composition is skewed to polar residues over residues 391-408 (TSYNRTYRSELPSKTTPN) and 504-534 (DNGSDSSGRNATAASSRGSNDSRQQRFDTSS).

Belongs to the protein kinase superfamily. NEK Ser/Thr protein kinase family. NIMA subfamily. As to expression, expressed in anthers, pistils and leaves.

It catalyses the reaction L-seryl-[protein] + ATP = O-phospho-L-seryl-[protein] + ADP + H(+). It carries out the reaction L-threonyl-[protein] + ATP = O-phospho-L-threonyl-[protein] + ADP + H(+). In terms of biological role, may be involved in plant development processes. The chain is Serine/threonine-protein kinase Nek2 from Oryza sativa subsp. japonica (Rice).